The primary structure comprises 348 residues: Protein RecA (348 aa).

An ATP-binding site is contributed by 66–73 (GPESSGKT).

It belongs to the RecA family.

It localises to the cytoplasm. Functionally, can catalyze the hydrolysis of ATP in the presence of single-stranded DNA, the ATP-dependent uptake of single-stranded DNA by duplex DNA, and the ATP-dependent hybridization of homologous single-stranded DNAs. It interacts with LexA causing its activation and leading to its autocatalytic cleavage. The protein is Protein RecA of Legionella pneumophila (strain Paris).